The following is a 161-amino-acid chain: Phosphopantetheine adenylyltransferase (161 aa).

Residue Ser9 participates in substrate binding. ATP-binding positions include 9–10 (SF) and His17. Substrate-binding residues include Lys41, Thr73, and Arg87. ATP contacts are provided by residues 88-90 (GLR), Glu98, and 123-129 (FAHISST).

Belongs to the bacterial CoaD family. In terms of assembly, homohexamer. Mg(2+) serves as cofactor.

The protein resides in the cytoplasm. The enzyme catalyses (R)-4'-phosphopantetheine + ATP + H(+) = 3'-dephospho-CoA + diphosphate. It functions in the pathway cofactor biosynthesis; coenzyme A biosynthesis; CoA from (R)-pantothenate: step 4/5. Functionally, reversibly transfers an adenylyl group from ATP to 4'-phosphopantetheine, yielding dephospho-CoA (dPCoA) and pyrophosphate. This is Phosphopantetheine adenylyltransferase from Chloroflexus aggregans (strain MD-66 / DSM 9485).